A 297-amino-acid chain; its full sequence is Lipoyl synthase (297 aa).

The [4Fe-4S] cluster site is built by C37, C42, C48, C63, C67, C70, and S276. The Radical SAM core domain occupies 49–265; sequence WSRKHATVMI…ERIAKTKGFL (217 aa).

It belongs to the radical SAM superfamily. Lipoyl synthase family. The cofactor is [4Fe-4S] cluster.

It is found in the cytoplasm. The catalysed reaction is [[Fe-S] cluster scaffold protein carrying a second [4Fe-4S](2+) cluster] + N(6)-octanoyl-L-lysyl-[protein] + 2 oxidized [2Fe-2S]-[ferredoxin] + 2 S-adenosyl-L-methionine + 4 H(+) = [[Fe-S] cluster scaffold protein] + N(6)-[(R)-dihydrolipoyl]-L-lysyl-[protein] + 4 Fe(3+) + 2 hydrogen sulfide + 2 5'-deoxyadenosine + 2 L-methionine + 2 reduced [2Fe-2S]-[ferredoxin]. Its pathway is protein modification; protein lipoylation via endogenous pathway; protein N(6)-(lipoyl)lysine from octanoyl-[acyl-carrier-protein]: step 2/2. Its function is as follows. Catalyzes the radical-mediated insertion of two sulfur atoms into the C-6 and C-8 positions of the octanoyl moiety bound to the lipoyl domains of lipoate-dependent enzymes, thereby converting the octanoylated domains into lipoylated derivatives. The polypeptide is Lipoyl synthase (Rickettsia typhi (strain ATCC VR-144 / Wilmington)).